The sequence spans 596 residues: Capsid protein VP1 (596 aa).

Belongs to the microviridae F protein family.

It localises to the virion. The protein resides in the host cytoplasm. Functionally, assembles to form an icosahedral capsid with a T=1 symmetry. The protein is Capsid protein VP1 of Chlamydia phage 1 (Bacteriophage Chp1).